The primary structure comprises 171 residues: Endoribonuclease YbeY (171 aa).

The Zn(2+) site is built by His126, His130, and His136.

The protein belongs to the endoribonuclease YbeY family. Requires Zn(2+) as cofactor.

It localises to the cytoplasm. In terms of biological role, single strand-specific metallo-endoribonuclease involved in late-stage 70S ribosome quality control and in maturation of the 3' terminus of the 16S rRNA. In Rhizobium leguminosarum bv. trifolii (strain WSM2304), this protein is Endoribonuclease YbeY.